Consider the following 256-residue polypeptide: 4-hydroxy-tetrahydrodipicolinate reductase (256 aa).

NAD(+) contacts are provided by residues 12–17 (GINGRV), D39, 86–88 (GTT), and 110–113 (AANY). The active-site Proton donor/acceptor is the H144. A (S)-2,3,4,5-tetrahydrodipicolinate-binding site is contributed by H145. The active-site Proton donor is the K148. 154–155 (GT) contacts (S)-2,3,4,5-tetrahydrodipicolinate.

Belongs to the DapB family.

The protein localises to the cytoplasm. It carries out the reaction (S)-2,3,4,5-tetrahydrodipicolinate + NAD(+) + H2O = (2S,4S)-4-hydroxy-2,3,4,5-tetrahydrodipicolinate + NADH + H(+). It catalyses the reaction (S)-2,3,4,5-tetrahydrodipicolinate + NADP(+) + H2O = (2S,4S)-4-hydroxy-2,3,4,5-tetrahydrodipicolinate + NADPH + H(+). It participates in amino-acid biosynthesis; L-lysine biosynthesis via DAP pathway; (S)-tetrahydrodipicolinate from L-aspartate: step 4/4. Catalyzes the conversion of 4-hydroxy-tetrahydrodipicolinate (HTPA) to tetrahydrodipicolinate. This chain is 4-hydroxy-tetrahydrodipicolinate reductase, found in Gluconacetobacter diazotrophicus (strain ATCC 49037 / DSM 5601 / CCUG 37298 / CIP 103539 / LMG 7603 / PAl5).